The primary structure comprises 641 residues: MVAVVQADYSRAEALAAWTRLSDEFIGNCYVSVRPRHAPAWEVVVASAAGSLRLEAFKRAHDHDFLDRLAVAIGNWEQKAQRPDHEIAQMLDQVGDYGLMQGMTNPDKGFMHADILLPLLQARDACAIVVRTEPVFQQLGTAFLVRPDLILTAAHVVMDVDAATGRWASTLKNGLAFHFREKPNQREHPTLAIRPAAVALISHALPHGRPPNLLERSLAAPADTCLDYALIRLAQRVSHLRPVEVVDTAAVKQGKPCWAFGFPGGNALMMDVDLVTDIDPGSGRWLHRANVAAGMSGGCCINHEGQVAGLHEGTLDSEDDAKVKRNRGISIAAIRRDQCRDGKDPLKQVASSPSLEFRDPALVDGWYRAGTALAGEAGAAQWRASVEAALRGRNPDATDSLPAYHPWFARADVEKWIDSAAPDERLSLIHGPPGVGKSFCIHLLRGKLDPYADLVVFNPTQTNDMTWSDATGHAAAANASDYRTAAASVRYRAIDDFLGELRDRSAGGTRTCYVAIDFGPAGRQDRFVGTNWVELIAILAAAGWIRVMLIGLDDYERSVMIDRMESRPETDSVKIAESELAPITAAEFRTYAKHLASARGKPAPKQAEMAKYVDSAVVGVAEPMKMVAAVRAAIELEAALS.

A helical transmembrane segment spans residues 532-552 (WVELIAILAAAGWIRVMLIGL).

It belongs to the peptidase S1 family.

The protein resides in the cell inner membrane. In terms of biological role, possibly a dedicated protease for substrate gasdermin bGSDM; cleaves the bGSDM precursor, releasing the pore-forming moiety, which integrates into the membrane and triggers cell death. Involved in defense against bacteriophages. When this probable 4 gene operon (bGSDM-FE772_23060-FE772_23065-FE772_23070) is inserted into E.coli it provides nearly 100-fold protection against phages T5 and T6 and about 8-fold against phage T4. The operon without bGSDM no longer protects against phage. In Lysobacter enzymogenes, this protein is Probable serine protease FE772_23065.